Consider the following 263-residue polypeptide: uncharacterized protein (263 aa).

Residues 72–168 adopt a coiled-coil conformation; the sequence is LDKKETKELS…RTIVEIRNTK (97 aa). A disordered region spans residues 76-158; that stretch reads ETKELSKKEK…EKKEKKEKED (83 aa). Basic residues predominate over residues 83 to 95; sequence KEKKQLKKEKKAL. Residues 96-107 show a composition bias toward basic and acidic residues; the sequence is KKENKGGKDKKD. The segment covering 108 to 121 has biased composition (basic residues); the sequence is KKDKKDKKDKKDKK. 2 stretches are compositionally biased toward basic and acidic residues: residues 122–131 and 139–158; these read DKKDKGDKKD and KHDD…EKED.

This is an uncharacterized protein from Dictyostelium discoideum (Social amoeba).